Here is a 320-residue protein sequence, read N- to C-terminus: Lipoyl synthase (320 aa).

[4Fe-4S] cluster is bound by residues Cys67, Cys72, Cys78, Cys93, Cys97, Cys100, and Ser307. Positions 79-296 constitute a Radical SAM core domain; it reads FNHGTATFMI…RDKANEMGFE (218 aa).

Belongs to the radical SAM superfamily. Lipoyl synthase family. [4Fe-4S] cluster is required as a cofactor.

It localises to the cytoplasm. The enzyme catalyses [[Fe-S] cluster scaffold protein carrying a second [4Fe-4S](2+) cluster] + N(6)-octanoyl-L-lysyl-[protein] + 2 oxidized [2Fe-2S]-[ferredoxin] + 2 S-adenosyl-L-methionine + 4 H(+) = [[Fe-S] cluster scaffold protein] + N(6)-[(R)-dihydrolipoyl]-L-lysyl-[protein] + 4 Fe(3+) + 2 hydrogen sulfide + 2 5'-deoxyadenosine + 2 L-methionine + 2 reduced [2Fe-2S]-[ferredoxin]. The protein operates within protein modification; protein lipoylation via endogenous pathway; protein N(6)-(lipoyl)lysine from octanoyl-[acyl-carrier-protein]: step 2/2. Functionally, catalyzes the radical-mediated insertion of two sulfur atoms into the C-6 and C-8 positions of the octanoyl moiety bound to the lipoyl domains of lipoate-dependent enzymes, thereby converting the octanoylated domains into lipoylated derivatives. The protein is Lipoyl synthase of Haemophilus influenzae (strain 86-028NP).